Reading from the N-terminus, the 415-residue chain is Serine hydroxymethyltransferase (415 aa).

(6S)-5,6,7,8-tetrahydrofolate-binding positions include leucine 121 and 125 to 127 (GHL). An N6-(pyridoxal phosphate)lysine modification is found at lysine 230. Residue 355–357 (SPF) coordinates (6S)-5,6,7,8-tetrahydrofolate.

It belongs to the SHMT family. As to quaternary structure, homodimer. It depends on pyridoxal 5'-phosphate as a cofactor.

It localises to the cytoplasm. It carries out the reaction (6R)-5,10-methylene-5,6,7,8-tetrahydrofolate + glycine + H2O = (6S)-5,6,7,8-tetrahydrofolate + L-serine. It participates in one-carbon metabolism; tetrahydrofolate interconversion. Its pathway is amino-acid biosynthesis; glycine biosynthesis; glycine from L-serine: step 1/1. Its function is as follows. Catalyzes the reversible interconversion of serine and glycine with tetrahydrofolate (THF) serving as the one-carbon carrier. This reaction serves as the major source of one-carbon groups required for the biosynthesis of purines, thymidylate, methionine, and other important biomolecules. Also exhibits THF-independent aldolase activity toward beta-hydroxyamino acids, producing glycine and aldehydes, via a retro-aldol mechanism. The chain is Serine hydroxymethyltransferase from Lactococcus lactis subsp. lactis (strain IL1403) (Streptococcus lactis).